The primary structure comprises 297 residues: Phosphatidylserine decarboxylase proenzyme (297 aa).

Residues Asp90, His147, and Ser252 each act as charge relay system; for autoendoproteolytic cleavage activity in the active site. The active-site Schiff-base intermediate with substrate; via pyruvic acid; for decarboxylase activity is the Ser252. A Pyruvic acid (Ser); by autocatalysis modification is found at Ser252.

This sequence belongs to the phosphatidylserine decarboxylase family. PSD-B subfamily. Prokaryotic type I sub-subfamily. In terms of assembly, heterodimer of a large membrane-associated beta subunit and a small pyruvoyl-containing alpha subunit. Pyruvate serves as cofactor. Is synthesized initially as an inactive proenzyme. Formation of the active enzyme involves a self-maturation process in which the active site pyruvoyl group is generated from an internal serine residue via an autocatalytic post-translational modification. Two non-identical subunits are generated from the proenzyme in this reaction, and the pyruvate is formed at the N-terminus of the alpha chain, which is derived from the carboxyl end of the proenzyme. The autoendoproteolytic cleavage occurs by a canonical serine protease mechanism, in which the side chain hydroxyl group of the serine supplies its oxygen atom to form the C-terminus of the beta chain, while the remainder of the serine residue undergoes an oxidative deamination to produce ammonia and the pyruvoyl prosthetic group on the alpha chain. During this reaction, the Ser that is part of the protease active site of the proenzyme becomes the pyruvoyl prosthetic group, which constitutes an essential element of the active site of the mature decarboxylase.

The protein resides in the cell membrane. It catalyses the reaction a 1,2-diacyl-sn-glycero-3-phospho-L-serine + H(+) = a 1,2-diacyl-sn-glycero-3-phosphoethanolamine + CO2. The protein operates within phospholipid metabolism; phosphatidylethanolamine biosynthesis; phosphatidylethanolamine from CDP-diacylglycerol: step 2/2. Functionally, catalyzes the formation of phosphatidylethanolamine (PtdEtn) from phosphatidylserine (PtdSer). This chain is Phosphatidylserine decarboxylase proenzyme, found in Stutzerimonas stutzeri (strain A1501) (Pseudomonas stutzeri).